Reading from the N-terminus, the 310-residue chain is Ornithine carbamoyltransferase (310 aa).

Carbamoyl phosphate-binding positions include 57 to 60 (STRT), glutamine 84, arginine 108, and 135 to 138 (HPCQ). L-ornithine-binding positions include asparagine 166, aspartate 229, and 233-234 (SM). Residues 269 to 270 (CL) and arginine 297 contribute to the carbamoyl phosphate site.

This sequence belongs to the aspartate/ornithine carbamoyltransferase superfamily. OTCase family.

The protein resides in the cytoplasm. It catalyses the reaction carbamoyl phosphate + L-ornithine = L-citrulline + phosphate + H(+). The protein operates within amino-acid biosynthesis; L-arginine biosynthesis; L-arginine from L-ornithine and carbamoyl phosphate: step 1/3. Functionally, reversibly catalyzes the transfer of the carbamoyl group from carbamoyl phosphate (CP) to the N(epsilon) atom of ornithine (ORN) to produce L-citrulline. The protein is Ornithine carbamoyltransferase of Thermosynechococcus vestitus (strain NIES-2133 / IAM M-273 / BP-1).